The chain runs to 286 residues: Shikimate dehydrogenase (NADP(+)) (286 aa).

Residues 22 to 24 (SFS) and Thr69 each bind shikimate. Residue Lys73 is the Proton acceptor of the active site. Residue Glu85 participates in NADP(+) binding. Residues Asn94 and Asp109 each contribute to the shikimate site. NADP(+) contacts are provided by residues 133–137 (GAGGA), 157–162 (NRTIDK), and Leu231. Residue Tyr233 participates in shikimate binding. Residue Gly254 participates in NADP(+) binding.

Belongs to the shikimate dehydrogenase family. As to quaternary structure, homodimer.

It catalyses the reaction shikimate + NADP(+) = 3-dehydroshikimate + NADPH + H(+). It functions in the pathway metabolic intermediate biosynthesis; chorismate biosynthesis; chorismate from D-erythrose 4-phosphate and phosphoenolpyruvate: step 4/7. Its function is as follows. Involved in the biosynthesis of the chorismate, which leads to the biosynthesis of aromatic amino acids. Catalyzes the reversible NADPH linked reduction of 3-dehydroshikimate (DHSA) to yield shikimate (SA). The polypeptide is Shikimate dehydrogenase (NADP(+)) (Alkaliphilus oremlandii (strain OhILAs) (Clostridium oremlandii (strain OhILAs))).